Reading from the N-terminus, the 133-residue chain is Small ribosomal subunit protein uS8c (133 aa).

Disordered stretches follow at residues 1–23 (MGNDAIDDVTTAPRNASSRGAET) and 44–133 (FSGN…HVWR). Polar residues-rich tracts occupy residues 12–23 (APRNASSRGAET) and 55–66 (TNRFPVSTSKYQ). A compositionally biased stretch (basic residues) spans 67-81 (GRTRKARITTRRRVS). The span at 114–133 (TDREARQKRIGGEAPRHVWR) shows a compositional bias: basic and acidic residues.

The protein belongs to the universal ribosomal protein uS8 family. Part of the 30S ribosomal subunit.

The protein resides in the plastid. It is found in the chloroplast. Its function is as follows. One of the primary rRNA binding proteins, it binds directly to 16S rRNA central domain where it helps coordinate assembly of the platform of the 30S subunit. In Selaginella uncinata (Blue spike-moss), this protein is Small ribosomal subunit protein uS8c (rps8).